The following is a 336-amino-acid chain: Potassium channel subfamily K member 1 (336 aa).

Residues 1–20 (MLQSLAGSSCVRLVERHRSA) lie on the Cytoplasmic side of the membrane. The chain crosses the membrane as a helical span at residues 21–41 (RCFGFLVLGYLLYLVFGAVVF). Topologically, residues 42 to 103 (SSVELPYEDL…SNASGNWNWD (62 aa)) are extracellular. A glycan (N-linked (GlcNAc...) asparagine) is linked at Asn95. Residues 104–116 (FTSALFFASTVLS) constitute an intramembrane region (helical). Residues 117–122 (TTGYGH) lie within the membrane without spanning it. The segment at 117–122 (TTGYGH) is selectivity filter 1. The Extracellular segment spans residues 123 to 132 (TVPLSDGGKA). A helical membrane pass occupies residues 133–156 (FCIIYSVIGIPFTLLFLTAVVQRI). The Cytoplasmic segment spans residues 157–181 (TVHVTRRPVLYFHIRWGFSKQVVAI). A helical transmembrane segment spans residues 182-202 (VHAVLLGFVTVSCFFFIPAAV). Residues 203-211 (FSVLEDDWN) are Extracellular-facing. The helical intramembrane region spans 212–224 (FLESFYFCFISLS). The selectivity filter 2 stretch occupies residues 225-230 (TIGLGD). Residues 225 to 231 (TIGLGDY) lie within the membrane without spanning it. The Extracellular segment spans residues 232-243 (VPGEGYNQKFRE). Residues 244-267 (LYKIGITCYLLLGLIAMLVVLETF) form a helical membrane-spanning segment. Topologically, residues 268–336 (CELHELKKFR…SACMDGPANH (69 aa)) are cytoplasmic. Residue Lys274 forms a Glycyl lysine isopeptide (Lys-Gly) (interchain with G-Cter in SUMO) linkage. The segment at 293 to 299 (IIEHDQL) is important for intracellular retention in recycling endosomes. Positions 315 to 336 (QKQNEPFVATQSSACMDGPANH) are disordered. Phosphoserine is present on Ser326.

The protein belongs to the two pore domain potassium channel (TC 1.A.1.8) family. As to quaternary structure, homodimer; disulfide-linked. Heterodimer with KCNK2; disulfide-linked. In astrocytes, forms mostly heterodimeric potassium channels with KCNK2, with only a minor proportion of functional channels containing homodimeric KCNK1. Interacts with KCNK3 and KCNK9, forming functional heterodimeric channels. Interacts with GNG4. Identified in a complex with PSD and ARF6; interacts only with PSD that is bound to ARF6. Interacts with UBE2I. Post-translationally, sumoylation is controversial. Sumoylated by UBE2I. Not sumoylated when expressed in xenopus oocytes or mammalian cells. Sumoylation inactivates the channel, but does not interfere with expression at the cell membrane. Sumoylation of a single subunit is sufficient to silence the dimeric channel. Sumoylation of KCNK1 is sufficient to silence heterodimeric channels formed by KCNK1 and KCNK3 or KCNK9. Desumoylated by SENP1; this activates the channel. Desumoylated by SENP1; this strongly increases halothane-mediated activation of heterodimeric channels formed with KCNK9. SENP1 treatment has no effect.

The protein localises to the cell membrane. It localises to the recycling endosome. Its subcellular location is the synaptic cell membrane. The protein resides in the cytoplasmic vesicle. It is found in the perikaryon. The protein localises to the cell projection. It localises to the dendrite. Its subcellular location is the apical cell membrane. The enzyme catalyses K(+)(in) = K(+)(out). The catalysed reaction is NH4(+)(in) = NH4(+)(out). It carries out the reaction Na(+)(in) = Na(+)(out). It catalyses the reaction Rb(+)(in) = Rb(+)(out). The enzyme catalyses Cs(+)(in) = Cs(+)(out). The catalysed reaction is Li(+)(in) = Li(+)(out). It carries out the reaction L-glutamate(out) = L-glutamate(in). It catalyses the reaction chloride(in) = chloride(out). Ion channel that contributes to passive transmembrane potassium transport and to the regulation of the resting membrane potential in brain astrocytes, but also in kidney and in other tissues. Forms dimeric channels through which potassium ions pass in accordance with their electrochemical gradient. The channel is selective for K(+) ions at physiological potassium concentrations and at neutral pH, but becomes permeable to Na(+) at subphysiological K(+) levels, and upon acidification of the extracellular medium. The homodimer has very low potassium channel activity, when expressed in heterologous systems, and can function as weakly inward rectifying potassium channel. Channel activity is modulated by activation of serotonin receptors. Heterodimeric channels containing KCNK1 and KCNK2 have much higher activity, and may represent the predominant form in astrocytes. Heterodimeric channels containing KCNK1 and KCNK3 or KCNK9 have much higher activity. Heterodimeric channels formed by KCNK1 and KCNK9 may contribute to halothane-sensitive currents. Mediates outward rectifying potassium currents in dentate gyrus granule cells and contributes to the regulation of their resting membrane potential. Contributes to the regulation of action potential firing in dentate gyrus granule cells and down-regulates their intrinsic excitability. In astrocytes, the heterodimer formed by KCNK1 and KCNK2 is required for rapid glutamate release in response to activation of G-protein coupled receptors, such as F2R and CNR1. Required for normal ion and water transport in the kidney. Contributes to the regulation of the resting membrane potential of pancreatic beta cells. The low channel activity of homodimeric KCNK1 may be due to sumoylation. The low channel activity may be due to rapid internalization from the cell membrane and retention in recycling endosomes. Permeable to monovalent cations with ion selectivity for K(+) &gt; Rb(+) &gt;&gt; NH4(+) &gt;&gt; Cs(+) = Na(+) = Li(+). The polypeptide is Potassium channel subfamily K member 1 (Pongo abelii (Sumatran orangutan)).